The chain runs to 516 residues: Glycosyltransferase-like protein gnt15 (516 aa).

At 1–24 the chain is on the cytoplasmic side; that stretch reads MSNFYNNNPRRNTFRLTERIKKKP. The helical; Signal-anchor for type II membrane protein transmembrane segment at 25 to 45 threads the bilayer; that stretch reads YQTLIVFILIFLFLYVFGPFG. Over 46–516 the chain is Extracellular; it reads EKKSNNNNNN…NDNCLTREHW (471 aa). Asparagine 152 is a glycosylation site (N-linked (GlcNAc...) asparagine). Residues 199-250 form a disordered region; the sequence is DTSNNNNNNNNNNNNNNNNNNNNNNNNNNNNNNNENNDNDNGNNNNNNDNEK. A compositionally biased stretch (low complexity) spans 202 to 246; that stretch reads NNNNNNNNNNNNNNNNNNNNNNNNNNNNNNNENNDNDNGNNNNNN. Residues asparagine 386 and asparagine 412 are each glycosylated (N-linked (GlcNAc...) asparagine).

It belongs to the glycosyltransferase 8 family. Highly divergent.

The protein resides in the membrane. Its function is as follows. May have a role in modulating cell adhesion and glycosylation. Essential for development. The chain is Glycosyltransferase-like protein gnt15 (gnt15) from Dictyostelium discoideum (Social amoeba).